The following is a 1354-amino-acid chain: Enhancer of mRNA-decapping protein 4 homolog (1354 aa).

Positions 18–38 are disordered; the sequence is PLSASSSPPPSVHRSPRCGKA. Position 32 is a phosphoserine (Ser32). WD repeat units lie at residues 309 to 348 and 363 to 406; these read EEDS…VRNH and CSLF…CLQT. Residues 552–581 are disordered; the sequence is ERSSLNSKRSQTPEDNLLIKEEPESPNSGT. Over residues 554–565 the composition is skewed to polar residues; it reads SSLNSKRSQTPE. At Ser561 the chain carries Phosphoserine. Thr563 bears the Phosphothreonine mark. At Ser576 the chain carries Phosphoserine. The residue at position 581 (Thr581) is a Phosphothreonine. Ser759, Ser762, and Ser763 each carry phosphoserine. Residues 765–803 are a coiled coil; it reads SREVQEIMATQDDADAYEAELENLDDDDDDEEEELANSS. Residues 788-799 show a composition bias toward acidic residues; that stretch reads LDDDDDDEEEEL. Disordered regions lie at residues 788-811 and 838-884; these read LDDD…AVDG and NTNN…AGGT. Positions 853–884 are enriched in low complexity; it reads NNNTSVGSNSNNNTATTLSTSNTSSSNNAGGT. 3 coiled-coil regions span residues 893–936, 969–1036, and 1159–1188; these read ELNA…HSKQ, NEHK…QAQM, and KHRT…QVQE. A Phosphoserine modification is found at Ser1207. Thr1211 and Thr1317 each carry phosphothreonine. Tyr1320 bears the Phosphotyrosine mark.

Belongs to the WD repeat EDC4 family. Homodimer. Interacts with Dcp1 and Dcp2. Interacts with Gyf.

The protein localises to the cytoplasm. It localises to the P-body. Functionally, in the process of mRNA degradation, seems to play a role in mRNA decapping. Required for silencing a subset of endogenous miRNA targets. The chain is Enhancer of mRNA-decapping protein 4 homolog (Ge-1) from Drosophila melanogaster (Fruit fly).